The following is a 365-amino-acid chain: Probable UDP-arabinopyranose mutase 1 (365 aa).

Residues Asp100–Asp102 carry the DXD motif motif. N-linked (Glc...) arginine glycosylation is present at Arg148.

The protein belongs to the RGP family. As to quaternary structure, homopentamer or homohexamer. Mn(2+) serves as cofactor. Requires Mg(2+) as cofactor. Reversibly glycosylated by UDP-glucose, UDP-xylose and UDP-galactose, but not UDP-mannose. As to expression, expressed in all tissues tested, including root, tuber, leaf, petiole, shoot, stolon and stem.

It localises to the secreted. It is found in the cell wall. Its subcellular location is the cell junction. The protein localises to the plasmodesma. The protein resides in the golgi apparatus. It catalyses the reaction UDP-beta-L-arabinofuranose = UDP-beta-L-arabinopyranose. Probable UDP-L-arabinose mutase involved in the biosynthesis of cell wall non-cellulosic polysaccharides. Was initially shown to possess an autoglycosylating activity which is dependent on the presence of UDP-glucose and manganese. In Solanum tuberosum (Potato), this protein is Probable UDP-arabinopyranose mutase 1.